We begin with the raw amino-acid sequence, 416 residues long: MGLERVVVIGLGVSGRSIARFLAQKGVCVLGVDKSLHALQNCPYIQEKYLENEEFPSQVDYVVRSPGVSKEHPWVQAAIASHIPVMTDIQLAFQTEKFTERESLAITGTTGKTTTILFLEYLFKRSGIPAFAMGNVGIPILDGMQNPGVRIVEISSFQLADQEKSYPVLSGGMILNISDNHLDYHGNFSEYFQAKQNLALCMRNPDDLWVGDERFYGHLYLEEVQKYMRLLDKESALKPLYLHDKHNYCCAYLLAKIEFPISETSFIEAVATFNKPPHRMEYLGQKQGIHYINDSKATTVSATETALLGVGNQAIVILGGRNKGCTFSSLLPALRKAAKSVVAMGECAQEIARDLEEFPVTVVKNLSEALLCAEEQAVPGDVIVLSPACASFDQFRSYEERGAMFKHLVGMEEVLL.

108–114 (GTTGKTT) is an ATP binding site.

It belongs to the MurCDEF family.

Its subcellular location is the cytoplasm. It carries out the reaction UDP-N-acetyl-alpha-D-muramoyl-L-alanine + D-glutamate + ATP = UDP-N-acetyl-alpha-D-muramoyl-L-alanyl-D-glutamate + ADP + phosphate + H(+). It participates in cell wall biogenesis; peptidoglycan biosynthesis. In terms of biological role, cell wall formation. Catalyzes the addition of glutamate to the nucleotide precursor UDP-N-acetylmuramoyl-L-alanine (UMA). This chain is UDP-N-acetylmuramoylalanine--D-glutamate ligase, found in Chlamydia trachomatis serovar L2b (strain UCH-1/proctitis).